The sequence spans 390 residues: ATP phosphoribosyltransferase regulatory subunit (390 aa).

Belongs to the class-II aminoacyl-tRNA synthetase family. HisZ subfamily. In terms of assembly, heteromultimer composed of HisG and HisZ subunits.

It is found in the cytoplasm. It functions in the pathway amino-acid biosynthesis; L-histidine biosynthesis; L-histidine from 5-phospho-alpha-D-ribose 1-diphosphate: step 1/9. Required for the first step of histidine biosynthesis. May allow the feedback regulation of ATP phosphoribosyltransferase activity by histidine. The chain is ATP phosphoribosyltransferase regulatory subunit from Nitrosomonas eutropha (strain DSM 101675 / C91 / Nm57).